The chain runs to 320 residues: Cytochrome f (320 aa).

The signal sequence occupies residues 1–35 (MHTKNLFYSRPQQITQYLSAFLMMVILTRTSISSA). 4 residues coordinate heme: Y36, C56, C59, and H60. A helical membrane pass occupies residues 286 to 306 (VQVLLFFFASIILAQIFLVLK).

The protein belongs to the cytochrome f family. The 4 large subunits of the cytochrome b6-f complex are cytochrome b6, subunit IV (17 kDa polypeptide, petD), cytochrome f and the Rieske protein, while the 4 small subunits are PetG, PetL, PetM and PetN. The complex functions as a dimer. The cofactor is heme.

The protein resides in the plastid thylakoid membrane. In terms of biological role, component of the cytochrome b6-f complex, which mediates electron transfer between photosystem II (PSII) and photosystem I (PSI), cyclic electron flow around PSI, and state transitions. The chain is Cytochrome f from Cuscuta obtusiflora (Peruvian dodder).